Reading from the N-terminus, the 73-residue chain is Large ribosomal subunit protein uL30 (73 aa).

This sequence belongs to the universal ribosomal protein uL30 family. Part of the 50S ribosomal subunit.

This chain is Large ribosomal subunit protein uL30, found in Borreliella afzelii (strain PKo) (Borrelia afzelii).